The primary structure comprises 873 residues: Leucine--tRNA ligase (873 aa).

The 'HIGH' region motif lies at 42–52 (PYPSGKLHMGH). The interval 624–643 (PVEIGGTEKMSKSKNNGVDP) is disordered. A 'KMSKS' region motif is present at residues 632 to 636 (KMSKS). K635 contributes to the ATP binding site.

The protein belongs to the class-I aminoacyl-tRNA synthetase family.

It localises to the cytoplasm. It catalyses the reaction tRNA(Leu) + L-leucine + ATP = L-leucyl-tRNA(Leu) + AMP + diphosphate. The protein is Leucine--tRNA ligase of Pseudomonas aeruginosa (strain ATCC 15692 / DSM 22644 / CIP 104116 / JCM 14847 / LMG 12228 / 1C / PRS 101 / PAO1).